A 660-amino-acid polypeptide reads, in one-letter code: Bifunctional polymyxin resistance protein ArnA (660 aa).

Positions 1-304 (MKAVIFAYHD…ALGLVKGALL (304 aa)) are formyltransferase ArnAFT. The active-site Proton donor; for formyltransferase activity is the His-104. (6R)-10-formyltetrahydrofolate is bound by residues Arg-114 and 136–140 (TARAD). The tract at residues 314 to 660 (RRTRVLILGV…QTVDLPDAAQ (347 aa)) is dehydrogenase ArnADH. NAD(+) contacts are provided by residues Asp-347 and 368–369 (DI). UDP-alpha-D-glucuronate is bound by residues Ala-393, Tyr-398, and 432–433 (TS). Catalysis depends on Glu-434, which acts as the Proton acceptor; for decarboxylase activity. Residues Arg-460, Asn-492, 526-535 (KLVDGGAQKR), and Tyr-613 contribute to the UDP-alpha-D-glucuronate site. The active-site Proton donor; for decarboxylase activity is Arg-619.

This sequence in the N-terminal section; belongs to the Fmt family. UDP-L-Ara4N formyltransferase subfamily. In the C-terminal section; belongs to the NAD(P)-dependent epimerase/dehydratase family. UDP-glucuronic acid decarboxylase subfamily. As to quaternary structure, homohexamer, formed by a dimer of trimers.

It carries out the reaction UDP-alpha-D-glucuronate + NAD(+) = UDP-beta-L-threo-pentopyranos-4-ulose + CO2 + NADH. The catalysed reaction is UDP-4-amino-4-deoxy-beta-L-arabinose + (6R)-10-formyltetrahydrofolate = UDP-4-deoxy-4-formamido-beta-L-arabinose + (6S)-5,6,7,8-tetrahydrofolate + H(+). It participates in nucleotide-sugar biosynthesis; UDP-4-deoxy-4-formamido-beta-L-arabinose biosynthesis; UDP-4-deoxy-4-formamido-beta-L-arabinose from UDP-alpha-D-glucuronate: step 1/3. The protein operates within nucleotide-sugar biosynthesis; UDP-4-deoxy-4-formamido-beta-L-arabinose biosynthesis; UDP-4-deoxy-4-formamido-beta-L-arabinose from UDP-alpha-D-glucuronate: step 3/3. It functions in the pathway bacterial outer membrane biogenesis; lipopolysaccharide biosynthesis. Bifunctional enzyme that catalyzes the oxidative decarboxylation of UDP-glucuronic acid (UDP-GlcUA) to UDP-4-keto-arabinose (UDP-Ara4O) and the addition of a formyl group to UDP-4-amino-4-deoxy-L-arabinose (UDP-L-Ara4N) to form UDP-L-4-formamido-arabinose (UDP-L-Ara4FN). The modified arabinose is attached to lipid A and is required for resistance to polymyxin and cationic antimicrobial peptides. The polypeptide is Bifunctional polymyxin resistance protein ArnA (Sodalis glossinidius (strain morsitans)).